Here is a 573-residue protein sequence, read N- to C-terminus: Arginine--tRNA ligase (573 aa).

A 'HIGH' region motif is present at residues 122–132 (PNLAKEMHVGH).

This sequence belongs to the class-I aminoacyl-tRNA synthetase family. Monomer.

The protein resides in the cytoplasm. The catalysed reaction is tRNA(Arg) + L-arginine + ATP = L-arginyl-tRNA(Arg) + AMP + diphosphate. This chain is Arginine--tRNA ligase, found in Laribacter hongkongensis (strain HLHK9).